Reading from the N-terminus, the 117-residue chain is MPRVKRGFKARQRRNKVLKLAKGYRGARSKLFRSATEAVDRALNYAFRDRRVKKRDFRALWIARINAAARINGLSYSKLIHGLKIAKVEVDRKVMADLAVSDPRGFAEIASLAKANI.

Belongs to the bacterial ribosomal protein bL20 family.

Functionally, binds directly to 23S ribosomal RNA and is necessary for the in vitro assembly process of the 50S ribosomal subunit. It is not involved in the protein synthesizing functions of that subunit. This is Large ribosomal subunit protein bL20 from Geotalea uraniireducens (strain Rf4) (Geobacter uraniireducens).